The following is a 160-amino-acid chain: Cytochrome b6-f complex subunit 4 (160 aa).

The next 3 membrane-spanning stretches (helical) occupy residues 36–56 (LLYV…ALAV), 95–115 (LLGV…PFIE), and 131–151 (TVFL…ALPL).

This sequence belongs to the cytochrome b family. PetD subfamily. In terms of assembly, the 4 large subunits of the cytochrome b6-f complex are cytochrome b6, subunit IV (17 kDa polypeptide, PetD), cytochrome f and the Rieske protein, while the 4 small subunits are PetG, PetL, PetM and PetN. The complex functions as a dimer.

It localises to the cellular thylakoid membrane. Its function is as follows. Component of the cytochrome b6-f complex, which mediates electron transfer between photosystem II (PSII) and photosystem I (PSI), cyclic electron flow around PSI, and state transitions. The chain is Cytochrome b6-f complex subunit 4 from Trichormus variabilis (strain ATCC 29413 / PCC 7937) (Anabaena variabilis).